A 450-amino-acid polypeptide reads, in one-letter code: tRNA-2-methylthio-N(6)-dimethylallyladenosine synthase (450 aa).

The region spanning 7 to 127 (KRLYIKTYGC…LPELIARAHR (121 aa)) is the MTTase N-terminal domain. [4Fe-4S] cluster-binding residues include cysteine 16, cysteine 52, cysteine 90, cysteine 165, cysteine 169, and cysteine 172. The region spanning 151-378 (QVSGVSAFLT…NQLLDEQQKA (228 aa)) is the Radical SAM core domain. The region spanning 381–443 (ILQVGKTMPV…KMSLGGVLET (63 aa)) is the TRAM domain.

The protein belongs to the methylthiotransferase family. MiaB subfamily. Monomer. Requires [4Fe-4S] cluster as cofactor.

The protein localises to the cytoplasm. It carries out the reaction N(6)-dimethylallyladenosine(37) in tRNA + (sulfur carrier)-SH + AH2 + 2 S-adenosyl-L-methionine = 2-methylsulfanyl-N(6)-dimethylallyladenosine(37) in tRNA + (sulfur carrier)-H + 5'-deoxyadenosine + L-methionine + A + S-adenosyl-L-homocysteine + 2 H(+). Functionally, catalyzes the methylthiolation of N6-(dimethylallyl)adenosine (i(6)A), leading to the formation of 2-methylthio-N6-(dimethylallyl)adenosine (ms(2)i(6)A) at position 37 in tRNAs that read codons beginning with uridine. The sequence is that of tRNA-2-methylthio-N(6)-dimethylallyladenosine synthase from Caulobacter sp. (strain K31).